A 284-amino-acid chain; its full sequence is Short chain dehydrogenase/reductase AacuD (284 aa).

V37 contributes to the NADP(+) binding site. Active-site proton donor residues include S166 and Y180. Positions 180, 184, and 215 each coordinate NADP(+). K184 (lowers pKa of active site Tyr) is an active-site residue.

It belongs to the short-chain dehydrogenases/reductases (SDR) family.

It participates in secondary metabolite biosynthesis. In terms of biological role, short chain dehydrogenase/reductase; part of the gene cluster that mediates the biosynthesis of the tetrahydroxanthone dimer secalonic acid D. The pathway begins with the synthesis of atrochrysone thioester by the polyketide synthase AacuL. The atrochrysone carboxyl ACP thioesterase AacuM then breaks the thioester bond and releases the atrochrysone carboxylic acid from AacuL. Atrochrysone carboxylic acid is decarboxylated by the decarboxylase AacuI, and oxidized by the anthrone oxygenase AacuG to yield emodin. Emodin is then reduced to emodin hydroquinone by a yet unidentified oxidoreductase. A-ring reduction by the short chain dehydrogenase AacuN, dehydration by the scytalone dehydratase-like protein AacuK and probable spontaneous re-oxidation, results in overall deoxygenation to chrysophanol. Baeyer-Villiger oxidation by the Baeyer-Villiger monooxygenase (BVMO) AacuH then yields monodictyphenone. Monodictyphenone is transformed into compounds with the tetrahydroxanthone skeleton via methylesterification by the methyltransferase AacuQ, followed by the action of the flavin-dependent monooxygenase AacuC, the isomerase AacuP, and the short chain dehydrogenase/reductase AacuF or AacuD. AacuF and AacuD should accept the same compound as a substrate but perform the ketoreduction with a different stereoselectivity, thus yielding blennolides B and A, respectively. In the final step of the biosynthesis, the cytochrome P450 monooxygenase AacuE accepts blennolide B and/or blennolide A to conduct the dimerization reaction to furnish the tetrahydroxanthone dimers, secalonic acids D, B, and F. This chain is Short chain dehydrogenase/reductase AacuD, found in Aspergillus aculeatus (strain ATCC 16872 / CBS 172.66 / WB 5094).